Here is a 209-residue protein sequence, read N- to C-terminus: PRA1 family protein A2 (209 aa).

4 helical membrane passes run 51–72, 76–98, 142–162, and 163–183; these read LYYY…ALVT, ALVG…AASF, RWVF…SSCG, and LLWV…HASI.

Belongs to the PRA1 family.

The protein resides in the endosome membrane. Its function is as follows. May be involved in both secretory and endocytic intracellular trafficking in the endosomal/prevacuolar compartments. The protein is PRA1 family protein A2 (PRA1A2) of Arabidopsis thaliana (Mouse-ear cress).